A 366-amino-acid chain; its full sequence is Ribosomal RNA large subunit methyltransferase M (366 aa).

Residues S188, 221 to 224 (CPGG), D240, D260, and D277 each bind S-adenosyl-L-methionine. K306 functions as the Proton acceptor in the catalytic mechanism.

It belongs to the class I-like SAM-binding methyltransferase superfamily. RNA methyltransferase RlmE family. RlmM subfamily. In terms of assembly, monomer.

The protein resides in the cytoplasm. The enzyme catalyses cytidine(2498) in 23S rRNA + S-adenosyl-L-methionine = 2'-O-methylcytidine(2498) in 23S rRNA + S-adenosyl-L-homocysteine + H(+). In terms of biological role, catalyzes the 2'-O-methylation at nucleotide C2498 in 23S rRNA. In Erwinia tasmaniensis (strain DSM 17950 / CFBP 7177 / CIP 109463 / NCPPB 4357 / Et1/99), this protein is Ribosomal RNA large subunit methyltransferase M.